The chain runs to 279 residues: Ribosomal RNA small subunit methyltransferase A (279 aa).

H15, L17, G42, E64, D89, and N109 together coordinate S-adenosyl-L-methionine.

Belongs to the class I-like SAM-binding methyltransferase superfamily. rRNA adenine N(6)-methyltransferase family. RsmA subfamily.

The protein resides in the cytoplasm. The enzyme catalyses adenosine(1518)/adenosine(1519) in 16S rRNA + 4 S-adenosyl-L-methionine = N(6)-dimethyladenosine(1518)/N(6)-dimethyladenosine(1519) in 16S rRNA + 4 S-adenosyl-L-homocysteine + 4 H(+). Specifically dimethylates two adjacent adenosines (A1518 and A1519) in the loop of a conserved hairpin near the 3'-end of 16S rRNA in the 30S particle. May play a critical role in biogenesis of 30S subunits. In Prochlorococcus marinus (strain SARG / CCMP1375 / SS120), this protein is Ribosomal RNA small subunit methyltransferase A.